Here is a 662-residue protein sequence, read N- to C-terminus: p-hydroxybenzoic acid efflux pump subunit AaeB (662 aa).

Transmembrane regions (helical) follow at residues 22 to 42 (FAFK…HLQL), 52 to 72 (AAIV…SGAI), 76 to 96 (GMLR…IIIA), 102 to 122 (VVML…SSLV), 129 to 149 (VFGL…GTPL), 161 to 181 (EIVL…PRSI), 378 to 398 (LFWL…IAVV), 415 to 435 (FLFG…FIMP), 439 to 459 (QSML…GLEV), 467 to 487 (LGAL…TFHI), and 491 to 511 (LDSA…ILLI).

Belongs to the aromatic acid exporter ArAE (TC 2.A.85) family.

Its subcellular location is the cell inner membrane. Functionally, forms an efflux pump with AaeA. Could function as a metabolic relief valve, allowing to eliminate certain compounds when they accumulate to high levels in the cell. This chain is p-hydroxybenzoic acid efflux pump subunit AaeB, found in Pectobacterium carotovorum subsp. carotovorum (strain PC1).